The sequence spans 240 residues: Manganese transport system ATP-binding protein MntB (240 aa).

The ABC transporter domain maps to 1-233 (MEIQGLTIAY…KIQFAYGDAP (233 aa)). 33-40 (GPNGAGKS) provides a ligand contact to ATP.

This sequence belongs to the ABC transporter superfamily.

It localises to the cell membrane. Functionally, this protein is probably a component of a manganese permease, a binding protein-dependent, ATP-driven transport system. Probably responsible for energy coupling to the transport system. In Listeria monocytogenes serovar 1/2a (strain ATCC BAA-679 / EGD-e), this protein is Manganese transport system ATP-binding protein MntB (mntB).